A 333-amino-acid polypeptide reads, in one-letter code: Atrochrysone carboxyl ACP thioesterase (333 aa).

The Zn(2+) site is built by His-104, His-106, Asp-108, and His-109. The Proton donor/acceptor role is filled by Asp-108.

This sequence belongs to the metallo-beta-lactamase superfamily. It depends on Zn(2+) as a cofactor.

The enzyme catalyses atrochrysone carboxyl-[ACP] + H2O = atrochrysone carboxylate + holo-[ACP] + H(+). Its pathway is pigment biosynthesis. Atrochrysone carboxyl ACP thioesterase; part of the gene cluster that mediates the biosynthesis of the bianthraquinone cladofulvin, a conidial pigment not required for virulence but that plays a role in fitness and resistance to environmental stresses including UV light and low-temperature stress. The pathway begins with the synthesis of atrochrysone thioester by the polyketide synthase (PKS) claG. The atrochrysone carboxyl ACP thioesterase claF then breaks the thioester bond and releases the atrochrysone carboxylic acid from claG. This compound is decarboxylated by claH to yield emodin, which is further converted to chrysophanol hydroquinone by the reductase claC and the dehydratase claB. The cytochrome P450 monooxygenase claM then catalyzes the dimerization of nataloe-emodin to cladofulvin. The sequence is that of Atrochrysone carboxyl ACP thioesterase from Passalora fulva (Tomato leaf mold).